We begin with the raw amino-acid sequence, 293 residues long: Ribosomal protein L11 methyltransferase (293 aa).

4 residues coordinate S-adenosyl-L-methionine: Thr145, Gly166, Asp188, and Asn229.

It belongs to the methyltransferase superfamily. PrmA family.

It is found in the cytoplasm. It catalyses the reaction L-lysyl-[protein] + 3 S-adenosyl-L-methionine = N(6),N(6),N(6)-trimethyl-L-lysyl-[protein] + 3 S-adenosyl-L-homocysteine + 3 H(+). Methylates ribosomal protein L11. The protein is Ribosomal protein L11 methyltransferase of Halorhodospira halophila (strain DSM 244 / SL1) (Ectothiorhodospira halophila (strain DSM 244 / SL1)).